The following is a 368-amino-acid chain: Alcohol dehydrogenase 6 (368 aa).

Residue serine 23 is modified to Phosphoserine. 7 residues coordinate Zn(2+): cysteine 47, histidine 69, cysteine 99, cysteine 102, cysteine 105, cysteine 113, and cysteine 175. NAD(+)-binding positions include 200 to 205 (GLGGVG), aspartate 224, lysine 229, and 293 to 295 (VGV).

The protein belongs to the zinc-containing alcohol dehydrogenase family. Class-V subfamily. In terms of assembly, dimer. The cofactor is Zn(2+). Stomach and liver.

The protein localises to the cytoplasm. It catalyses the reaction a primary alcohol + NAD(+) = an aldehyde + NADH + H(+). The enzyme catalyses a secondary alcohol + NAD(+) = a ketone + NADH + H(+). With respect to regulation, inhibited partially by pyrazole (10 mM) in the reaction mixture containing 100 mM ethanol at pH 10.0. Its function is as follows. Alcohol dehydrogenase. Catalyzes the NAD-dependent oxidation of primary alcohols to the corresponding aldehydes. Oxidizes secondary alcohols to the corresponding ketones. The polypeptide is Alcohol dehydrogenase 6 (ADH6) (Homo sapiens (Human)).